Consider the following 393-residue polypeptide: S-adenosylmethionine synthase 1 (393 aa).

Residue Glu9 participates in Mg(2+) binding. His15 contributes to the ATP binding site. Glu43 is a binding site for K(+). Residues Glu56 and Gln99 each contribute to the L-methionine site. ATP-binding positions include 167–169 (DGK), 235–238 (SGRF), Asp246, 252–253 (RK), Ala269, Lys273, and Lys277. Position 246 (Asp246) interacts with L-methionine. Residue Lys277 coordinates L-methionine.

The protein belongs to the AdoMet synthase family. As to quaternary structure, homotetramer. Requires Mn(2+) as cofactor. It depends on Mg(2+) as a cofactor. Co(2+) is required as a cofactor. K(+) serves as cofactor.

The protein resides in the cytoplasm. It catalyses the reaction L-methionine + ATP + H2O = S-adenosyl-L-methionine + phosphate + diphosphate. It functions in the pathway amino-acid biosynthesis; S-adenosyl-L-methionine biosynthesis; S-adenosyl-L-methionine from L-methionine: step 1/1. Catalyzes the formation of S-adenosylmethionine from methionine and ATP. The reaction comprises two steps that are both catalyzed by the same enzyme: formation of S-adenosylmethionine (AdoMet) and triphosphate, and subsequent hydrolysis of the triphosphate. The polypeptide is S-adenosylmethionine synthase 1 (METK1) (Solanum tuberosum (Potato)).